A 530-amino-acid polypeptide reads, in one-letter code: Lanosterol 14-alpha demethylase CYP51 (530 aa).

Residues 1–20 (MSATKSIVGEALEYVNIGLS) are Lumenal-facing. Residues 21-41 (HFLALPLAQRISLIIIIPFIY) form a helical membrane-spanning segment. Over 42-530 (NIVWQLLYSL…WEKRNPEQKI (489 aa)) the chain is Cytoplasmic. A Glycyl lysine isopeptide (Lys-Gly) (interchain with G-Cter in ubiquitin) cross-link involves residue Lys-116. Tyr-126 serves as a coordination point for lanosterol. Residue Gly-314 coordinates itraconazole. Glycyl lysine isopeptide (Lys-Gly) (interchain with G-Cter in ubiquitin) cross-links involve residues Lys-353 and Lys-454. Phosphoserine is present on Ser-458. Position 470 (Cys-470) interacts with heme.

The protein belongs to the cytochrome P450 family. As to quaternary structure, interacts with ERG28. The cofactor is heme.

The protein localises to the endoplasmic reticulum membrane. The enzyme catalyses a 14alpha-methyl steroid + 3 reduced [NADPH--hemoprotein reductase] + 3 O2 = a Delta(14) steroid + formate + 3 oxidized [NADPH--hemoprotein reductase] + 4 H2O + 4 H(+). It carries out the reaction a 14alpha-methyl steroid + reduced [NADPH--hemoprotein reductase] + O2 = a 14alpha-hydroxymethyl steroid + oxidized [NADPH--hemoprotein reductase] + H2O + H(+). The catalysed reaction is a 14alpha-hydroxymethyl steroid + reduced [NADPH--hemoprotein reductase] + O2 = a 14alpha-formyl steroid + oxidized [NADPH--hemoprotein reductase] + 2 H2O + H(+). It catalyses the reaction a 14alpha-formyl steroid + reduced [NADPH--hemoprotein reductase] + O2 = a Delta(14) steroid + formate + oxidized [NADPH--hemoprotein reductase] + H2O + 2 H(+). The enzyme catalyses lanosterol + 3 reduced [NADPH--hemoprotein reductase] + 3 O2 = 4,4-dimethyl-5alpha-cholesta-8,14,24-trien-3beta-ol + formate + 3 oxidized [NADPH--hemoprotein reductase] + 4 H2O + 4 H(+). It carries out the reaction lanosterol + reduced [NADPH--hemoprotein reductase] + O2 = 32-hydroxylanosterol + oxidized [NADPH--hemoprotein reductase] + H2O + H(+). The catalysed reaction is 32-hydroxylanosterol + reduced [NADPH--hemoprotein reductase] + O2 = 32-oxolanosterol + oxidized [NADPH--hemoprotein reductase] + 2 H2O + H(+). It catalyses the reaction 32-oxolanosterol + reduced [NADPH--hemoprotein reductase] + O2 = 4,4-dimethyl-5alpha-cholesta-8,14,24-trien-3beta-ol + formate + oxidized [NADPH--hemoprotein reductase] + H2O + 2 H(+). It participates in steroid biosynthesis; zymosterol biosynthesis; zymosterol from lanosterol: step 1/6. Sterol 14alpha-demethylase that plays a critical role in the third module of ergosterol biosynthesis pathway, being ergosterol the major sterol component in fungal membranes that participates in a variety of functions. The third module or late pathway involves the ergosterol synthesis itself through consecutive reactions that mainly occur in the endoplasmic reticulum (ER) membrane. Starting from lanosterol (lanosta-8,24-dien-3beta-ol), it catalyzes the three-step oxidative removal of the 14alpha-methyl group (C-32) of the sterol in the form of formate, and converts the sterol to 4,4-dimethyl-5alpha-cholesta-8,14,24-trien-3beta-ol, which is critical for ergosterol biosynthesis. Can demethylate substrates not intrinsic to yeast, such as eburicol (24-methylene-24,25-dihydrolanosterol) at a similar rate to lanosterol, and at a lower rate the 24,25-dihydrolanosterol (DHL) to 4,4-dimethyl-8,14-cholestadien-3beta-ol. In Saccharomyces cerevisiae (strain ATCC 204508 / S288c) (Baker's yeast), this protein is Lanosterol 14-alpha demethylase CYP51.